The chain runs to 207 residues: dITP/XTP pyrophosphatase (207 aa).

Residue 11–16 (TGNPGK) participates in substrate binding. Catalysis depends on Asp72, which acts as the Proton acceptor. Asp72 is a binding site for Mg(2+). Residues Ser73, 154 to 157 (FGYD), Lys177, and 182 to 183 (HR) each bind substrate.

Belongs to the HAM1 NTPase family. In terms of assembly, homodimer. Mg(2+) serves as cofactor.

It catalyses the reaction XTP + H2O = XMP + diphosphate + H(+). It carries out the reaction dITP + H2O = dIMP + diphosphate + H(+). The catalysed reaction is ITP + H2O = IMP + diphosphate + H(+). In terms of biological role, pyrophosphatase that catalyzes the hydrolysis of nucleoside triphosphates to their monophosphate derivatives, with a high preference for the non-canonical purine nucleotides XTP (xanthosine triphosphate), dITP (deoxyinosine triphosphate) and ITP. Seems to function as a house-cleaning enzyme that removes non-canonical purine nucleotides from the nucleotide pool, thus preventing their incorporation into DNA/RNA and avoiding chromosomal lesions. The chain is dITP/XTP pyrophosphatase from Thermus thermophilus (strain ATCC 27634 / DSM 579 / HB8).